A 271-amino-acid polypeptide reads, in one-letter code: 3-methyl-2-oxobutanoate hydroxymethyltransferase 2 (271 aa).

Positions 53 and 92 each coordinate Mg(2+). 3-methyl-2-oxobutanoate is bound by residues 53 to 54 (DS), Asp92, and Lys120. Glu122 provides a ligand contact to Mg(2+). The active-site Proton acceptor is the Glu189.

It belongs to the PanB family. Homodecamer; pentamer of dimers. Mg(2+) serves as cofactor.

It is found in the cytoplasm. The catalysed reaction is 3-methyl-2-oxobutanoate + (6R)-5,10-methylene-5,6,7,8-tetrahydrofolate + H2O = 2-dehydropantoate + (6S)-5,6,7,8-tetrahydrofolate. It participates in cofactor biosynthesis; (R)-pantothenate biosynthesis; (R)-pantoate from 3-methyl-2-oxobutanoate: step 1/2. In terms of biological role, catalyzes the reversible reaction in which hydroxymethyl group from 5,10-methylenetetrahydrofolate is transferred onto alpha-ketoisovalerate to form ketopantoate. The sequence is that of 3-methyl-2-oxobutanoate hydroxymethyltransferase 2 from Burkholderia lata (strain ATCC 17760 / DSM 23089 / LMG 22485 / NCIMB 9086 / R18194 / 383).